Consider the following 254-residue polypeptide: Phytolongin Phyl1.1 (254 aa).

A Longin domain is found at 12 to 113; it reads CVSRDNQILY…TAMIGSINVE (102 aa). A disordered region spans residues 138 to 173; sequence ELKSSNLGEQSEGSNSTKAPLLGRLSKQEKKKGKDH. Over residues 145–155 the composition is skewed to polar residues; the sequence is GEQSEGSNSTK. Residues 226–246 form a helical; Anchor for type IV membrane protein membrane-spanning segment; the sequence is IVLAIDAAICLTLFGIWLAIC.

This sequence belongs to the synaptobrevin family.

It is found in the membrane. Non-SNARE longin protein involved in membrane-trafficking machinery. This chain is Phytolongin Phyl1.1, found in Arabidopsis thaliana (Mouse-ear cress).